Here is a 315-residue protein sequence, read N- to C-terminus: Methionyl-tRNA formyltransferase (315 aa).

113 to 116 lines the (6S)-5,6,7,8-tetrahydrofolate pocket; the sequence is SLLP.

The protein belongs to the Fmt family.

The catalysed reaction is L-methionyl-tRNA(fMet) + (6R)-10-formyltetrahydrofolate = N-formyl-L-methionyl-tRNA(fMet) + (6S)-5,6,7,8-tetrahydrofolate + H(+). Functionally, attaches a formyl group to the free amino group of methionyl-tRNA(fMet). The formyl group appears to play a dual role in the initiator identity of N-formylmethionyl-tRNA by promoting its recognition by IF2 and preventing the misappropriation of this tRNA by the elongation apparatus. This Klebsiella pneumoniae (strain 342) protein is Methionyl-tRNA formyltransferase.